An 890-amino-acid polypeptide reads, in one-letter code: Translation initiation factor IF-2 (890 aa).

The interval 45-303 (LIDHLNQKNS…SLQQGFQKPA (259 aa)) is disordered. Over residues 67–81 (STLNIPGTGGKSKSV) the composition is skewed to polar residues. Over residues 92 to 217 (VKRDPQEAER…RMAEENKWTD (126 aa)) the composition is skewed to basic and acidic residues. A compositionally biased stretch (basic residues) spans 252–266 (GRGRNAKAARPKKGN). Basic and acidic residues predominate over residues 267 to 280 (KHAESKADREEARA). Residues 389–558 (PRAPVVTIMG…LLQAEVLELK (170 aa)) enclose the tr-type G domain. The interval 398 to 405 (GHVDHGKT) is G1. Residue 398–405 (GHVDHGKT) participates in GTP binding. The tract at residues 423 to 427 (GITQH) is G2. Positions 444–447 (DTPG) are G3. GTP is bound by residues 444–448 (DTPGH) and 498–501 (NKID). The G4 stretch occupies residues 498–501 (NKID). Positions 534-536 (SAK) are G5. N6-acetyllysine is present on lysine 808.

It belongs to the TRAFAC class translation factor GTPase superfamily. Classic translation factor GTPase family. IF-2 subfamily.

The protein resides in the cytoplasm. Functionally, one of the essential components for the initiation of protein synthesis. Protects formylmethionyl-tRNA from spontaneous hydrolysis and promotes its binding to the 30S ribosomal subunits. Also involved in the hydrolysis of GTP during the formation of the 70S ribosomal complex. The protein is Translation initiation factor IF-2 of Shigella boydii serotype 18 (strain CDC 3083-94 / BS512).